The primary structure comprises 759 residues: Phosphoribosylformylglycinamidine synthase subunit PurL (759 aa).

Residue histidine 61 is part of the active site. Tyrosine 64 and lysine 105 together coordinate ATP. Mg(2+) is bound at residue glutamate 107. Substrate is bound by residues 108-111 and arginine 130; that span reads SHNH. The active-site Proton acceptor is histidine 109. A Mg(2+)-binding site is contributed by aspartate 131. Substrate is bound at residue glutamine 260. A Mg(2+)-binding site is contributed by aspartate 288. 332–334 is a binding site for substrate; that stretch reads ESQ. ATP-binding residues include aspartate 520 and glycine 557. Asparagine 558 serves as a coordination point for Mg(2+). Serine 560 serves as a coordination point for substrate.

The protein belongs to the FGAMS family. Monomer. Part of the FGAM synthase complex composed of 1 PurL, 1 PurQ and 2 PurS subunits.

The protein resides in the cytoplasm. The enzyme catalyses N(2)-formyl-N(1)-(5-phospho-beta-D-ribosyl)glycinamide + L-glutamine + ATP + H2O = 2-formamido-N(1)-(5-O-phospho-beta-D-ribosyl)acetamidine + L-glutamate + ADP + phosphate + H(+). It functions in the pathway purine metabolism; IMP biosynthesis via de novo pathway; 5-amino-1-(5-phospho-D-ribosyl)imidazole from N(2)-formyl-N(1)-(5-phospho-D-ribosyl)glycinamide: step 1/2. In terms of biological role, part of the phosphoribosylformylglycinamidine synthase complex involved in the purines biosynthetic pathway. Catalyzes the ATP-dependent conversion of formylglycinamide ribonucleotide (FGAR) and glutamine to yield formylglycinamidine ribonucleotide (FGAM) and glutamate. The FGAM synthase complex is composed of three subunits. PurQ produces an ammonia molecule by converting glutamine to glutamate. PurL transfers the ammonia molecule to FGAR to form FGAM in an ATP-dependent manner. PurS interacts with PurQ and PurL and is thought to assist in the transfer of the ammonia molecule from PurQ to PurL. The sequence is that of Phosphoribosylformylglycinamidine synthase subunit PurL from Thermoplasma volcanium (strain ATCC 51530 / DSM 4299 / JCM 9571 / NBRC 15438 / GSS1).